Reading from the N-terminus, the 1205-residue chain is Caskin-2 (1205 aa).

ANK repeat units lie at residues 48 to 77, 81 to 110, 114 to 143, 147 to 176, 188 to 217, and 220 to 249; these read DGFS…SVDI, NGMR…SVNA, DGQI…NPCH, GKKT…CVSL, NFTT…EINK, and KMGT…DVNI. One can recognise an SH3 domain in the interval 281–347; sequence SGILKVRALK…PPSIVEVISK (67 aa). 2 stretches are compositionally biased toward polar residues: residues 377 to 388 and 398 to 411; these read SPGSQLGINPDT and GSES…SGQS. The interval 377-411 is disordered; sequence SPGSQLGINPDTSVAGDRHSVGSESSVRSAGSGQS. SAM domains follow at residues 468–531 and 537–601; these read KDAE…LIVA and QIPV…LLDL. Residues 666 to 687 are compositionally biased toward low complexity; it reads RRSFSQESISSRSQGSGHSQES. Disordered regions lie at residues 666–689, 784–964, 984–1054, and 1132–1155; these read RRSF…ESAS, RPGR…QRHL, QIAA…SQEP, and SEAS…KGPP. Over residues 823 to 840 the composition is skewed to polar residues; sequence SSMSSAEGQSPEGQSSVK. The span at 908 to 919 shows a compositional bias: low complexity; it reads ISSQHSSSESIP. The segment covering 942–959 has biased composition (polar residues); the sequence is DATSELSPTQESQLQSAE. The span at 1009–1037 shows a compositional bias: basic and acidic residues; the sequence is KNEEHDFNLTESDTVKRRPKVKEKEEESP. 2 stretches are compositionally biased toward polar residues: residues 1042–1054 and 1137–1155; these read ANNS…SQEP and REQT…KGPP.

The polypeptide is Caskin-2 (caskin2) (Xenopus laevis (African clawed frog)).